A 372-amino-acid polypeptide reads, in one-letter code: Alanine racemase (372 aa).

The active-site Proton acceptor; specific for D-alanine is Lys48. An N6-(pyridoxal phosphate)lysine modification is found at Lys48. Residue Arg143 participates in substrate binding. Tyr268 (proton acceptor; specific for L-alanine) is an active-site residue. Position 316 (Met316) interacts with substrate.

It belongs to the alanine racemase family. It depends on pyridoxal 5'-phosphate as a cofactor.

It catalyses the reaction L-alanine = D-alanine. It participates in amino-acid biosynthesis; D-alanine biosynthesis; D-alanine from L-alanine: step 1/1. Functionally, catalyzes the interconversion of L-alanine and D-alanine. May also act on other amino acids. This is Alanine racemase (alr) from Vibrio vulnificus (strain YJ016).